A 527-amino-acid chain; its full sequence is MSSDGERDMARKPIRRALISVYDKTGLIDLAQGLNAAGVDIVSTGSTAKAIADQGIAVTPVEELTGFPEVLDGRVKTLHPRVHAGLLADLRKPEHAAALEQLGIEAFELVVVNLYPFSQTVKSGATVDECVEQIDIGGSSMVRAAAKNHPSVAVVTDPLGYVGVLAAVQGGGFTLAERKMLASMAFQHIAEYEIAVASWMQSTLAPEQPPTAFPQWFGRSWRRSAILRYGENPHQQAALYSDPSACPGLAQAEQLHGKNMSYNNFTDADAAWRAAFDHEQSCVAIIKHANPCGIAISSLSVADAHRKAHECDPLSAYGGVIAANTEVSLEMAEYVSTIFTEVIVAPSYAPGAVDVLSCKKNVRVLVASAPLRGGSELRPVSGGLLIQQPDQLDTAGDNPANWTLATGSPAGPATLTDLVFAWRACRAVKSNAIVIAADGATIGVGMGQVNRVDAARLAVERGGDRVRGAVVASDAFFPFADGLQTLAAAGVTAIVHPGGSVRDAEVTAAATKAGVTLYLTGVRHFVH.

Positions 9–156 constitute an MGS-like domain; the sequence is MARKPIRRAL…KNHPSVAVVT (148 aa).

This sequence belongs to the PurH family.

It carries out the reaction (6R)-10-formyltetrahydrofolate + 5-amino-1-(5-phospho-beta-D-ribosyl)imidazole-4-carboxamide = 5-formamido-1-(5-phospho-D-ribosyl)imidazole-4-carboxamide + (6S)-5,6,7,8-tetrahydrofolate. The catalysed reaction is IMP + H2O = 5-formamido-1-(5-phospho-D-ribosyl)imidazole-4-carboxamide. It functions in the pathway purine metabolism; IMP biosynthesis via de novo pathway; 5-formamido-1-(5-phospho-D-ribosyl)imidazole-4-carboxamide from 5-amino-1-(5-phospho-D-ribosyl)imidazole-4-carboxamide (10-formyl THF route): step 1/1. The protein operates within purine metabolism; IMP biosynthesis via de novo pathway; IMP from 5-formamido-1-(5-phospho-D-ribosyl)imidazole-4-carboxamide: step 1/1. The protein is Bifunctional purine biosynthesis protein PurH of Mycobacterium leprae (strain Br4923).